Consider the following 632-residue polypeptide: 1-deoxy-D-xylulose-5-phosphate synthase (632 aa).

Residues H73 and 114–116 contribute to the thiamine diphosphate site; that span reads SHA. D146 lines the Mg(2+) pocket. Thiamine diphosphate contacts are provided by residues 147–148, N176, Y287, and E368; that span reads GA. N176 is a Mg(2+) binding site.

Belongs to the transketolase family. DXPS subfamily. Homodimer. Requires Mg(2+) as cofactor. Thiamine diphosphate is required as a cofactor.

The catalysed reaction is D-glyceraldehyde 3-phosphate + pyruvate + H(+) = 1-deoxy-D-xylulose 5-phosphate + CO2. It functions in the pathway metabolic intermediate biosynthesis; 1-deoxy-D-xylulose 5-phosphate biosynthesis; 1-deoxy-D-xylulose 5-phosphate from D-glyceraldehyde 3-phosphate and pyruvate: step 1/1. Functionally, catalyzes the acyloin condensation reaction between C atoms 2 and 3 of pyruvate and glyceraldehyde 3-phosphate to yield 1-deoxy-D-xylulose-5-phosphate (DXP). This chain is 1-deoxy-D-xylulose-5-phosphate synthase, found in Corynebacterium glutamicum (strain R).